The sequence spans 285 residues: N(G),N(G)-dimethylarginine dimethylaminohydrolase 1 (285 aa).

Position 2 is an N-acetylalanine (Ala-2). The substrate site is built by Leu-30, Asp-73, Glu-78, Asp-79, Arg-98, and Arg-145. Catalysis depends on His-173, which acts as the Proton donor. Residue Cys-222 is modified to S-nitrosocysteine. Val-268 is a substrate binding site. An S-nitrosocysteine modification is found at Cys-274. Residue Cys-274 is the Nucleophile of the active site. Position 274 (Cys-274) interacts with Zn(2+).

In terms of assembly, monomer. Widely distributed, highest concentrations found in brain, brain cortex and kidney (at protein level).

The enzyme catalyses N(omega),N(omega)-dimethyl-L-arginine + H2O = dimethylamine + L-citrulline. The catalysed reaction is N(omega)-methyl-L-arginine + H2O = L-citrulline + methylamine. With respect to regulation, copurifies with a tightly bound zinc ion. Activated by release of zinc. His and other agents that promote the release of bound zinc ions activate the enzyme (in vitro). Inhibited by S-nitrosylation. Zinc protects the protein against S-nitrosylation. Hydrolyzes N(G),N(G)-dimethyl-L-arginine (ADMA) and N(G)-monomethyl-L-arginine (MMA) which act as inhibitors of NOS. Has therefore a role in the regulation of nitric oxide generation. The sequence is that of N(G),N(G)-dimethylarginine dimethylaminohydrolase 1 (DDAH1) from Bos taurus (Bovine).